We begin with the raw amino-acid sequence, 417 residues long: Inactive cytochrome P450 76AD1 (417 aa).

A helical transmembrane segment spans residues 4 to 24; sequence ATLAMILAIWFISFHFIKLLF.

It belongs to the cytochrome P450 family.

The protein localises to the membrane. It functions in the pathway pigment biosynthesis; betalain biosynthesis. In terms of biological role, inactive cytochrome unable to convert L-DOPA to cyclo-DOPA in the betalain pathway and producing a yellow mutant phenotype. A frameshift replaces 108 amino acids of the active protein found in red beets (AC I3PFJ5) with 27 new residues followed by a stop codon. The sequence is that of Inactive cytochrome P450 76AD1 from Beta vulgaris (Sugar beet).